Consider the following 1213-residue polypeptide: DNA-directed RNA polymerase subunit beta (1213 aa).

Residues 1153 to 1213 form a disordered region; it reads RDMDEDSSEH…ADESDGKVSK (61 aa). Residues 1171–1198 are compositionally biased toward basic and acidic residues; the sequence is MAEEQEKKKLAEETGKSENKEDSNETAD.

This sequence belongs to the RNA polymerase beta chain family. As to quaternary structure, the RNAP catalytic core consists of 2 alpha, 1 beta, 1 beta' and 1 omega subunit. When a sigma factor is associated with the core the holoenzyme is formed, which can initiate transcription.

The enzyme catalyses RNA(n) + a ribonucleoside 5'-triphosphate = RNA(n+1) + diphosphate. In terms of biological role, DNA-dependent RNA polymerase catalyzes the transcription of DNA into RNA using the four ribonucleoside triphosphates as substrates. The sequence is that of DNA-directed RNA polymerase subunit beta from Lactobacillus acidophilus (strain ATCC 700396 / NCK56 / N2 / NCFM).